The following is a 232-amino-acid chain: MSEVITVKQTNMENIYECEFNDGSFRLCTRNLVSGFNVYGERLIKYEGVEYREWNAFRSKLAGAILKGLKTNPIRKGTKVLYLGAASGTTISHVSDIIELNGKAYGVEFSPRVVRELLLVAQRRPNIFPLLADARFPQSYKSVVENVDVLYVDIAQPDQTDIAIYNARFFLKVNGYMLLVIKARSIDVTKDPKEIYKAEVEKLENSNFETIQIINLDPYDKDHAIVLSRYKG.

S-adenosyl-L-methionine contacts are provided by residues 89-90 (TT), 108-109 (EF), 133-134 (DA), and 153-156 (DIAQ).

This sequence belongs to the methyltransferase superfamily. Fibrillarin family. Interacts with nop5. Component of box C/D small ribonucleoprotein (sRNP) particles that contain rpl7ae, FlpA and nop5, plus a guide RNA.

In terms of biological role, involved in pre-rRNA and tRNA processing. Utilizes the methyl donor S-adenosyl-L-methionine to catalyze the site-specific 2'-hydroxyl methylation of ribose moieties in rRNA and tRNA. Site specificity is provided by a guide RNA that base pairs with the substrate. Methylation occurs at a characteristic distance from the sequence involved in base pairing with the guide RNA. The protein is Fibrillarin-like rRNA/tRNA 2'-O-methyltransferase of Saccharolobus islandicus (strain M.16.27) (Sulfolobus islandicus).